Here is a 606-residue protein sequence, read N- to C-terminus: Mitogen-activated protein kinase kinase kinase 7 (606 aa).

The interval 1–300 is interaction with MAPK8IP1; that stretch reads MSTASAASSS…FPGADEPLQY (300 aa). In terms of domain architecture, Protein kinase spans 36-291; the sequence is IEVEEVVGRG…KIMTHLMRYF (256 aa). ATP contacts are provided by residues 42–50 and lysine 63; that span reads VGRGAFGVV. Lysine 72 is covalently cross-linked (Glycyl lysine isopeptide (Lys-Gly) (interchain with G-Cter in ubiquitin)). Aspartate 156 functions as the Proton acceptor in the catalytic mechanism. A Glycyl lysine isopeptide (Lys-Gly) (interchain with G-Cter in ubiquitin) cross-link involves residue lysine 158. A phosphothreonine; by autocatalysis mark is found at threonine 184 and threonine 187. Position 192 is a phosphoserine; by autocatalysis (serine 192). Residue lysine 209 forms a Glycyl lysine isopeptide (Lys-Gly) (interchain with G-Cter in ubiquitin) linkage. Disordered stretches follow at residues 301 to 338 and 354 to 391; these read PCQY…MEQV and KNQA…MSAD. Residues 306–338 are compositionally biased toward polar residues; it reads DEGQSNSATSTGSFMDIASTNTSNKSDTNMEQV. The segment covering 361-375 has biased composition (low complexity); sequence SDSGRLSLGASRGSS. 3 positions are modified to phosphoserine: serine 367, serine 389, and serine 439. A compositionally biased stretch (polar residues) spans 443 to 452; the sequence is LTVTGTEPGQ. The tract at residues 443–492 is disordered; it reads LTVTGTEPGQVSSRSSSPSVRMITTSGPTSEKPARSLPWTPDDSTDTNGS. The span at 453–463 shows a compositional bias: low complexity; sequence VSSRSSSPSVR. Serine 455 is subject to Phosphoserine.

This sequence belongs to the protein kinase superfamily. STE Ser/Thr protein kinase family. MAP kinase kinase kinase subfamily. Can form homodimer. Binds both upstream activators and downstream substrates in multimolecular complexes. Interacts with TAB1/MAP3K7IP1, TAB2/MAP3K7IP2 and TAB3/MAP3K7IP3. Identified in the TRIKA2 complex composed of MAP3K7/TAK1, TAB1/MAP3K7IP1 and TAB2/MAP3K7IP2. Interacts with PPM1L and PPM1B/PP2CB. Interaction with PP2A and PPP6C leads to its repressed activity. Interacts with TRAF6 and TAB1/MAP3K7IP1; during IL-1 signaling. Interacts with TAOK1 and TAOK2; interaction with TAOK2 interferes with MAP3K7 interaction with IKKA, thus preventing NF-kappa-B activation. Interacts with DYNC2I2 (via WD domains). Interacts with CYLD and RBCK1. Interacts with TGFBR1; induces MAP3K7/TAK1 activation by TRAF6. Interacts with MAPK8IP1 and SMAD6. Interacts with isoform 1 of VRK2. Interacts with DAB2; the interaction is induced by TGF-beta stimulation and may mediate TGF-beta stimulated JNK activation. Interacts with TRIM5. Part of a complex containing ITCH, NDFIP1 and MAP3K7. Interacts with PLEKHM1 (via N- and C-terminus). Found in a complex with SH3RF1, RAC2, MAP2K7/MKK7, MAPK8IP1/JIP1, MAPK8/JNK1 and MAPK9/JNK2. Interacts with SASH1. Interacts with RIPK1. Mg(2+) serves as cofactor. Post-translationally, association with TAB1/MAP3K7IP1 promotes autophosphorylation at Ser-192 and subsequent activation. Association with TAB2/MAP3K7IP2, itself associated with free unanchored Lys-63 polyubiquitin chain, promotes autophosphorylation and subsequent activation of MAP3K7. Dephosphorylation at Ser-192 by PPM1B/PP2CB and at Thr-187 by PP2A and PPP6C leads to inactivation. Deubiquitinated by USP19; leading to negative regulation of TNF-alpha- and IL-1beta-triggered NF-kappa-B activation. 'Lys-48'-linked polyubiquitination at Lys-72 is induced by TNFalpha, and leads to proteasomal degradation. Undergoes 'Lys-48'-linked polyubiquitination catalyzed by ITCH. 'Lys-63'-linked polyubiquitination at Lys-158 by TRIM8 does not lead to proteasomal degradation but contributes to autophosphorylation and activation. Deubiquitinated by CYLD, a protease that selectively cleaves 'Lys-63'-linked ubiquitin chains.

The protein resides in the cytoplasm. It is found in the cell membrane. It catalyses the reaction L-seryl-[protein] + ATP = O-phospho-L-seryl-[protein] + ADP + H(+). It carries out the reaction L-threonyl-[protein] + ATP = O-phospho-L-threonyl-[protein] + ADP + H(+). Its activity is regulated as follows. Activated by pro-inflammatory cytokines and in response to physical and chemical stresses, including osmotic stress, oxidative stress, arsenic and ultraviolet light irradiation. Activated by 'Lys-63'-linked polyubiquitination and by autophosphorylation. Association with TAB1/MAP3K7IP1 and TAB2/MAP3K7IP2 promotes activation through autophosphorylation, whereas PPM1B/PP2CB, PP2A and PPP6C dephosphorylation leads to inactivation. Ceramides are also able to activate MAP3K7/TAK1. Serine/threonine kinase which acts as an essential component of the MAP kinase signal transduction pathway. Plays an important role in the cascades of cellular responses evoked by changes in the environment. Mediates signal transduction of TRAF6, various cytokines including interleukin-1 (IL-1), transforming growth factor-beta (TGFB), TGFB-related factors like BMP2 and BMP4, toll-like receptors (TLR), tumor necrosis factor receptor CD40 and B-cell receptor (BCR). Once activated, acts as an upstream activator of the MKK/JNK signal transduction cascade and the p38 MAPK signal transduction cascade through the phosphorylation and activation of several MAP kinase kinases like MAP2K1/MEK1, MAP2K3/MKK3, MAP2K6/MKK6 and MAP2K7/MKK7. These MAP2Ks in turn activate p38 MAPKs and c-jun N-terminal kinases (JNKs); both p38 MAPK and JNK pathways control the transcription factors activator protein-1 (AP-1). Independently of MAP2Ks and p38 MAPKs, acts as a key activator of NF-kappa-B by promoting activation of the I-kappa-B-kinase (IKK) core complex. Mechanistically, recruited to polyubiquitin chains of RIPK2 and IKBKG/NEMO via TAB2/MAP3K7IP2 and TAB3/MAP3K7IP3, and catalyzes phosphorylation and activation of IKBKB/IKKB component of the IKK complex, leading to NF-kappa-B activation. In osmotic stress signaling, plays a major role in the activation of MAPK8/JNK1, but not that of NF-kappa-B. Promotes TRIM5 capsid-specific restriction activity. Phosphorylates RIPK1 at 'Ser-321' which positively regulates RIPK1 interaction with RIPK3 to promote necroptosis but negatively regulates RIPK1 kinase activity and its interaction with FADD to mediate apoptosis. Phosphorylates STING1 in response to cGAMP-activation, promoting association between STEEP1 and STING1 and STING1 translocation to COPII vesicles. This chain is Mitogen-activated protein kinase kinase kinase 7 (Map3k7), found in Rattus norvegicus (Rat).